The chain runs to 405 residues: Lipase lipl-1 (405 aa).

Residues 1–20 (MRSWSTVMLAVLATAATVFG) form the signal peptide. Asn66 is a glycosylation site (N-linked (GlcNAc...) asparagine). Ser169 (nucleophile) is an active-site residue. N-linked (GlcNAc...) asparagine glycosylation occurs at Asn273. Catalysis depends on charge relay system residues Asp344 and His376.

It belongs to the AB hydrolase superfamily. Lipase family.

Its subcellular location is the secreted. The protein localises to the lysosome lumen. In terms of biological role, lipase that, together with lipl-3, plays a role in the response to nutrient deprivation by controlling lipid metabolism. Specifically, involved in the breakdown of lipids during lipophagy, a process during which lipids contained in lipid droplets that have been delivered to lysosomes by autophagy are degraded. The chain is Lipase lipl-1 from Caenorhabditis elegans.